A 444-amino-acid chain; its full sequence is Aflatoxin biosynthesis regulatory protein (444 aa).

Residues 1-26 form a disordered region; it reads MVDHISPRASPGPIRSSQTRRARKLR. Positions 29–56 form a DNA-binding region, zn(2)-C6 fungal-type; it reads CTSCASSKVRCTKEKPACARCIERGLAC. A disordered region spans residues 64–167; the sequence is MGRNPRAPSP…QGLGGDLAGQ (104 aa). The segment covering 106-116 has biased composition (basic residues); that stretch reads TQAHTHAHSHP. Residues 120–130 are compositionally biased toward low complexity; that stretch reads PQSHPQSNQPP. Residues 136 to 149 are compositionally biased toward polar residues; it reads PNGSSSVSAIFSHQ.

In terms of assembly, interacts with its co-regulator aflS.

The protein resides in the nucleus. It is found in the endosome. Transcription factor involved in regulation of the aflatoxin biosynthesis gene cluster. Binds with its co-regulator aflS to AFLR1 elements (5'-TCGSWNNSCGR-3') present in the promoters of the aflatoxin cluster genes. The ratio of the expression data between aflS:aflR plays a crucial role in the regulation of aflatoxins production. A high ratio, produced at a range between 17 and 30 degrees Celsius, corresponds with the production profile of aflatoxin G1 biosynthesis. A low ratio, produced over 30 degrees Celsius, is related to aflatoxin B1 biosynthesis. The chain is Aflatoxin biosynthesis regulatory protein from Aspergillus parasiticus (strain ATCC 56775 / NRRL 5862 / SRRC 143 / SU-1).